Reading from the N-terminus, the 511-residue chain is Bifunctional purine biosynthesis protein PurH (511 aa).

The MGS-like domain occupies 1-144 (MKTALLSVSD…KNFASVLPVV (144 aa)).

This sequence belongs to the PurH family.

The catalysed reaction is (6R)-10-formyltetrahydrofolate + 5-amino-1-(5-phospho-beta-D-ribosyl)imidazole-4-carboxamide = 5-formamido-1-(5-phospho-D-ribosyl)imidazole-4-carboxamide + (6S)-5,6,7,8-tetrahydrofolate. The enzyme catalyses IMP + H2O = 5-formamido-1-(5-phospho-D-ribosyl)imidazole-4-carboxamide. It functions in the pathway purine metabolism; IMP biosynthesis via de novo pathway; 5-formamido-1-(5-phospho-D-ribosyl)imidazole-4-carboxamide from 5-amino-1-(5-phospho-D-ribosyl)imidazole-4-carboxamide (10-formyl THF route): step 1/1. Its pathway is purine metabolism; IMP biosynthesis via de novo pathway; IMP from 5-formamido-1-(5-phospho-D-ribosyl)imidazole-4-carboxamide: step 1/1. In Pediococcus pentosaceus (strain ATCC 25745 / CCUG 21536 / LMG 10740 / 183-1w), this protein is Bifunctional purine biosynthesis protein PurH.